A 264-amino-acid polypeptide reads, in one-letter code: Triosephosphate isomerase (264 aa).

Residue 13 to 15 (NWK) participates in substrate binding. His-98 functions as the Electrophile in the catalytic mechanism. The Proton acceptor role is filled by Glu-170. Substrate-binding positions include Gly-176, Ser-216, and 237-238 (GG).

This sequence belongs to the triosephosphate isomerase family. Homodimer.

It localises to the cytoplasm. It carries out the reaction D-glyceraldehyde 3-phosphate = dihydroxyacetone phosphate. It functions in the pathway carbohydrate biosynthesis; gluconeogenesis. The protein operates within carbohydrate degradation; glycolysis; D-glyceraldehyde 3-phosphate from glycerone phosphate: step 1/1. Its function is as follows. Involved in the gluconeogenesis. Catalyzes stereospecifically the conversion of dihydroxyacetone phosphate (DHAP) to D-glyceraldehyde-3-phosphate (G3P). The chain is Triosephosphate isomerase from Protochlamydia amoebophila (strain UWE25).